Here is a 139-residue protein sequence, read N- to C-terminus: Small ribosomal subunit protein eS6 (139 aa).

The protein belongs to the eukaryotic ribosomal protein eS6 family.

The sequence is that of Small ribosomal subunit protein eS6 from Methanosarcina barkeri (strain Fusaro / DSM 804).